The primary structure comprises 389 residues: Trans-2-enoyl-CoA reductase [NADH] (389 aa).

Residues 47–52 (GASTGY), 73–74 (FE), 110–111 (DA), and 138–139 (LA) each bind NAD(+). A substrate-binding site is contributed by Y224. The active-site Proton donor is Y234. NAD(+) is bound by residues K243 and 272-274 (LVT).

Belongs to the TER reductase family. Monomer.

The enzyme catalyses a 2,3-saturated acyl-CoA + NAD(+) = a (2E)-enoyl-CoA + NADH + H(+). The protein operates within lipid metabolism; fatty acid biosynthesis. In terms of biological role, involved in the fatty acid synthesis (FAS II). Catalyzes the reduction of a carbon-carbon double bond in an enoyl moiety that is covalently linked to a coenzyme A (CoA). This is Trans-2-enoyl-CoA reductase [NADH] from Clostridium perfringens (strain SM101 / Type A).